Consider the following 797-residue polypeptide: MGPAMFMAFRLWNWLLLLAVLTRSEATSYVNESSNPTAQQAPDARFAASSSDPDEGISVFELDYDYVQIPYEVTLWILLASLAKIGFHLYHRLPHLMPESCLLIIVGALVGGIIFGTHHKSPPVMDSSIYFLYLLPPIVLESGYFMPTRPFFENIGSILWWAGLGALINAFGIGLSLYFICQIKAFGLGDINLLHNLLFGSLISAVDPVAVLAVFEEARVNEQLYMMIFGEALLNDGISVVLYNILIAFTKMHKFEDIEAVDILAGCARFVIVGCGGVFFGIIFGFISAFITRFTQNISAIEPLIVFMFSYLSYLAAETLYLSGILAITACAVTMKKYVEENVSQTSYTTIKYFMKMLSSVSETLIFIFMGVSTIGKNHEWNWAFICFTLLFCQIWRAISVFTLFYVSNQFRTFPFSIKDQFIIFYSGVRGAGSFSLAFLLPLSLFPRKKLFVTATLVVTYFTVFFQGITIGPLVRYLDVRKTNKKESINEELHSRLMDHLKAGIEDVCGQWSHYQVRDKFKKFDHRYLRKILIRRNLPKSSIVSLYKKLEMKQAIEMVETGILSSVASPTPYQSERIQGIKRLSPEDVESMRDILTRSMYQVRQRTLSYNKYNLKPQTSEKQAKEILIRRQNTLRESMRKGQSLPWGKPAGTKNFRYLSFPYSNPQAARREARAAEPTDDDGTDSGFQPLMFSIHSRAGSLQERRQTQAVIPMKRLQRGEKALSFSYRSNTSWEDQAGWRRMDVLRPKPLFYAVAEEYDSGEQTEEETSAILSRWTAEHRHSTEHHKSHSPLLHRK.

At 1–13 the chain is on the cytoplasmic side; sequence MGPAMFMAFRLWN. The segment at residues 14 to 28 is an intramembrane region (name=A/M1); the sequence is WLLLLAVLTRSEATS. Residues 29-69 lie on the Cytoplasmic side of the membrane; it reads YVNESSNPTAQQAPDARFAASSSDPDEGISVFELDYDYVQI. Residues 32-52 are disordered; the sequence is ESSNPTAQQAPDARFAASSSD. Residues 70–90 constitute an intramembrane region (name=B/M2); that stretch reads PYEVTLWILLASLAKIGFHLY. At 91–94 the chain is on the cytoplasmic side; the sequence is HRLP. The helical transmembrane segment at 95-114 threads the bilayer; it reads HLMPESCLLIIVGALVGGII. The Extracellular portion of the chain corresponds to 115–127; the sequence is FGTHHKSPPVMDS. The helical transmembrane segment at 128–148 threads the bilayer; that stretch reads SIYFLYLLPPIVLESGYFMPT. Residues 149-154 lie on the Cytoplasmic side of the membrane; that stretch reads RPFFEN. Residues 155–175 form a helical membrane-spanning segment; sequence IGSILWWAGLGALINAFGIGL. Residues 176-194 lie on the Extracellular side of the membrane; it reads SLYFICQIKAFGLGDINLL. The chain crosses the membrane as a helical span at residues 195–215; that stretch reads HNLLFGSLISAVDPVAVLAVF. Topologically, residues 216–226 are cytoplasmic; sequence EEARVNEQLYM. The chain crosses the membrane as a helical span at residues 227 to 247; the sequence is MIFGEALLNDGISVVLYNILI. The Extracellular segment spans residues 248–270; the sequence is AFTKMHKFEDIEAVDILAGCARF. The chain crosses the membrane as a helical span at residues 271–291; the sequence is VIVGCGGVFFGIIFGFISAFI. Residues 292–304 lie on the Cytoplasmic side of the membrane; it reads TRFTQNISAIEPL. The helical transmembrane segment at 305–325 threads the bilayer; the sequence is IVFMFSYLSYLAAETLYLSGI. Over 326–352 the chain is Extracellular; it reads LAITACAVTMKKYVEENVSQTSYTTIK. Residue asparagine 342 is glycosylated (N-linked (GlcNAc...) asparagine). A helical membrane pass occupies residues 353-373; that stretch reads YFMKMLSSVSETLIFIFMGVS. At 374 to 384 the chain is on the cytoplasmic side; the sequence is TIGKNHEWNWA. Residues 385–405 traverse the membrane as a helical segment; sequence FICFTLLFCQIWRAISVFTLF. At 406–420 the chain is on the extracellular side; it reads YVSNQFRTFPFSIKD. The name=L intramembrane region spans 421 to 441; sequence QFIIFYSGVRGAGSFSLAFLL. The Extracellular segment spans residues 442–450; sequence PLSLFPRKK. The chain crosses the membrane as a helical span at residues 451–471; it reads LFVTATLVVTYFTVFFQGITI. The Cytoplasmic portion of the chain corresponds to 472–797; sequence GPLVRYLDVR…KSHSPLLHRK (326 aa). Over residues 759 to 769 the composition is skewed to acidic residues; that stretch reads YDSGEQTEEET. Residues 759–797 form a disordered region; it reads YDSGEQTEEETSAILSRWTAEHRHSTEHHKSHSPLLHRK. The span at 783 to 797 shows a compositional bias: basic residues; sequence STEHHKSHSPLLHRK.

This sequence belongs to the monovalent cation:proton antiporter 1 (CPA1) transporter (TC 2.A.36) family. Homodimer; each protomer has one site for sodium and one site for proton binding. Interacts with CHP1 and CHP2. May be phosphorylated. As to expression, expressed in kidney. Expressed in uterus and endometrial epithelial cells. Expressed in the inner segments of inner medullary collecting ducts (IMCD) in kidney. Expressed in AGTR1-positive neurons in organum vasculosum of the lamina terminalis (at protein level).

It localises to the basolateral cell membrane. It is found in the apical cell membrane. The protein resides in the zymogen granule membrane. The enzyme catalyses Na(+)(in) + H(+)(out) = Na(+)(out) + H(+)(in). The catalysed reaction is Na(+)(out) + NH4(+)(in) = Na(+)(in) + NH4(+)(out). Its activity is regulated as follows. Up-regulated in response to high extracellular sodium concentration. Electroneutral antiporter that exchanges sodium for protons or ammonium ions at the basolateral membrane of epithelia to regulate cell volume and intracellular pH upon hypertonic conditions. As part of transcellular ammonia transport in renal tubules, mediates basolateral ammonium extrusion in the medullary thick ascending limb, regulating the corticopapillary ammonium gradient and overall renal acid excretion. Mediates sodium:proton exchange in gastric parietal cells secondary to cAMP-dependent acid secretion and hyperosmolarity. Possibly coupled to chloride:bicarbonate antiporter, enables loading of parietal cells with sodium and chloride ions to maintain cell volume and normal gastric acid secretion. Functions as a sodium sensor in neurons of organum vasculosum of the lamina terminalis where it regulates water intake in response to increased sodium concentration in body fluids. The protein is Sodium/hydrogen exchanger 4 (Slc9a4) of Mus musculus (Mouse).